Consider the following 303-residue polypeptide: Putative S-adenosyl-L-methionine-dependent methyltransferase MAP_4197c (303 aa).

Residues Asp129 and 158 to 159 (DL) contribute to the S-adenosyl-L-methionine site.

Belongs to the UPF0677 family.

Functionally, exhibits S-adenosyl-L-methionine-dependent methyltransferase activity. The polypeptide is Putative S-adenosyl-L-methionine-dependent methyltransferase MAP_4197c (Mycolicibacterium paratuberculosis (strain ATCC BAA-968 / K-10) (Mycobacterium paratuberculosis)).